The sequence spans 272 residues: Undecaprenyl-diphosphatase (272 aa).

A run of 7 helical transmembrane segments spans residues 6–26 (SLLIAFILGVVEGLTEFLPVS), 45–65 (AKTFEVIIQLGSILAVVVMFW), 92–112 (THILLAMIPAVVLGLIFHDVI), 115–135 (LFYPQNVMYSLVIGGFLLLAA), 189–209 (YAASEFSFILAVPMMMGATVL), 221–241 (ADVPMFAVGFVTAFVVALIAI), and 251–271 (ISFIPFAIYRFIVAGVVYMVF).

This sequence belongs to the UppP family.

The protein localises to the cell inner membrane. It catalyses the reaction di-trans,octa-cis-undecaprenyl diphosphate + H2O = di-trans,octa-cis-undecaprenyl phosphate + phosphate + H(+). Its function is as follows. Catalyzes the dephosphorylation of undecaprenyl diphosphate (UPP). Confers resistance to bacitracin. This chain is Undecaprenyl-diphosphatase, found in Pectobacterium atrosepticum (strain SCRI 1043 / ATCC BAA-672) (Erwinia carotovora subsp. atroseptica).